Here is a 432-residue protein sequence, read N- to C-terminus: Interleukin-11 receptor subunit alpha-2 (432 aa).

An N-terminal signal peptide occupies residues 1-23; that stretch reads MSSSCSGLTRVLVAVATALVSSS. At 24–372 the chain is on the extracellular side; it reads SPCPQAWGPP…DPLEQVAVLA (349 aa). The 84-residue stretch at 27–110 folds into the Ig-like C2-type domain; sequence PQAWGPPGVQ…SGGMVTLKLG (84 aa). 3 cysteine pairs are disulfide-bonded: Cys-48-Cys-94, Cys-120-Cys-130, and Cys-170-Cys-180. 2 Fibronectin type-III domains span residues 112-219 and 220-317; these read PPAR…LRPD and PPQG…TPST. Asn-127 carries N-linked (GlcNAc...) asparagine glycosylation. The disordered stretch occupies residues 151-170; the sequence is KTLPGAESQRESPSTGPWPC. Asn-194 is a glycosylation site (N-linked (GlcNAc...) asparagine). The WSXWS motif signature appears at 304–308; that stretch reads WSAWS. The helical transmembrane segment at 373–393 threads the bilayer; that stretch reads SLGIFSCLGLAVGALALGLWL. The Cytoplasmic segment spans residues 394–432; the sequence is RLRRSGKEGPQKPGLLAPMIPVEKLPGIPNLQRTPENFS.

The protein belongs to the type I cytokine receptor family. Type 3 subfamily. In terms of assembly, on ligand binding, forms a multimer complex with IL6ST/gp130. In terms of tissue distribution, expression restricted to testis, lymph node and thymus. Highest level in testis.

Its subcellular location is the membrane. Its function is as follows. Receptor for interleukin-11. The receptor systems for IL6, LIF, OSM, CNTF, IL11 and CT1 can utilize IL6ST for initiating signal transmission. The IL11/IL11RA/IL6ST complex may be involved in the control of proliferation and/or differentiation of skeletogenic progenitor or other mesenchymal cells. The polypeptide is Interleukin-11 receptor subunit alpha-2 (Il11ra2) (Mus musculus (Mouse)).